Consider the following 505-residue polypeptide: ATP synthase subunit alpha, cyanelle (505 aa).

170-177 (GDRQTGKT) provides a ligand contact to ATP.

It belongs to the ATPase alpha/beta chains family. F-type ATPases have 2 components, CF(1) - the catalytic core - and CF(0) - the membrane proton channel. CF(1) has five subunits: alpha(3), beta(3), gamma(1), delta(1), epsilon(1). CF(0) has four main subunits: a, b, b' and c.

It is found in the plastid. Its subcellular location is the cyanelle thylakoid membrane. The enzyme catalyses ATP + H2O + 4 H(+)(in) = ADP + phosphate + 5 H(+)(out). Functionally, produces ATP from ADP in the presence of a proton gradient across the membrane. The alpha chain is a regulatory subunit. This Cyanophora paradoxa protein is ATP synthase subunit alpha, cyanelle.